The primary structure comprises 610 residues: Elongation factor 4 (610 aa).

Residues 7–189 (SRIRNFSIIA…AIVQRIPPPK (183 aa)) form the tr-type G domain. GTP is bound by residues 19–24 (DHGKST) and 136–139 (NKID).

It belongs to the TRAFAC class translation factor GTPase superfamily. Classic translation factor GTPase family. LepA subfamily.

The protein localises to the cell inner membrane. The enzyme catalyses GTP + H2O = GDP + phosphate + H(+). Required for accurate and efficient protein synthesis under certain stress conditions. May act as a fidelity factor of the translation reaction, by catalyzing a one-codon backward translocation of tRNAs on improperly translocated ribosomes. Back-translocation proceeds from a post-translocation (POST) complex to a pre-translocation (PRE) complex, thus giving elongation factor G a second chance to translocate the tRNAs correctly. Binds to ribosomes in a GTP-dependent manner. This is Elongation factor 4 from Thermus thermophilus (strain ATCC 27634 / DSM 579 / HB8).